The following is a 455-amino-acid chain: Pup--protein ligase (455 aa).

Glutamate 10 contributes to the Mg(2+) binding site. Residue arginine 55 coordinates ATP. Tyrosine 57 contributes to the Mg(2+) binding site. Aspartate 59 (proton acceptor) is an active-site residue. Glutamate 65 is a binding site for Mg(2+). Residues threonine 68 and tryptophan 422 each coordinate ATP.

The protein belongs to the Pup ligase/Pup deamidase family. Pup-conjugating enzyme subfamily.

It catalyses the reaction ATP + [prokaryotic ubiquitin-like protein]-L-glutamate + [protein]-L-lysine = ADP + phosphate + N(6)-([prokaryotic ubiquitin-like protein]-gamma-L-glutamyl)-[protein]-L-lysine.. It participates in protein degradation; proteasomal Pup-dependent pathway. Its pathway is protein modification; protein pupylation. Functionally, catalyzes the covalent attachment of the prokaryotic ubiquitin-like protein modifier Pup to the proteasomal substrate proteins, thereby targeting them for proteasomal degradation. This tagging system is termed pupylation. The ligation reaction involves the side-chain carboxylate of the C-terminal glutamate of Pup and the side-chain amino group of a substrate lysine. In Sanguibacter keddieii (strain ATCC 51767 / DSM 10542 / NCFB 3025 / ST-74), this protein is Pup--protein ligase.